We begin with the raw amino-acid sequence, 1782 residues long: Atrochrysone carboxylic acid synthase (1782 aa).

The interval 41–270 is N-terminal acylcarrier protein transacylase domain (SAT); sequence HTYTKDRRYP…ALPVYGGLCH (230 aa). In terms of domain architecture, Ketosynthase family 3 (KS3) spans 407–841; it reads QSKIAIVGMS…GGNSTLAIEE (435 aa). Residues Cys580, His716, and His759 each act as for beta-ketoacyl synthase activity in the active site. Residues 946–1266 form a malonyl-CoA:ACP transacylase (MAT) domain region; sequence FAFTGQGSSY…LGILHCAGVP (321 aa). The interval 1331-1648 is product template (PT) domain; sequence TSTVQQIIHE…RILLNRFFSA (318 aa). The segment at 1335-1468 is N-terminal hotdog fold; the sequence is QQIIHEQYDG…ATVYYEEASD (134 aa). Residues 1335 to 1643 enclose the PKS/mFAS DH domain; the sequence is QQIIHEQYDG…FRRYPRILLN (309 aa). The Proton acceptor; for dehydratase activity role is filled by His1367. The C-terminal hotdog fold stretch occupies residues 1495-1643; it reads VANRFTRRMA…FRRYPRILLN (149 aa). Asp1554 serves as the catalytic Proton donor; for dehydratase activity. The disordered stretch occupies residues 1653 to 1703; it reads ARKSTPATSAPAPAPPAGSEALQPKAAPASTPAAPASADAPTTNGVKAAAE. Residues 1678 to 1695 are compositionally biased toward low complexity; that stretch reads AAPASTPAAPASADAPTT. The Carrier domain maps to 1704–1781; that stretch reads PDANSTAAKA…DLKSWLLEYY (78 aa). O-(pantetheine 4'-phosphoryl)serine is present on Ser1741.

Specifically expressed in conidia.

The enzyme catalyses holo-[ACP] + 8 malonyl-CoA + 8 H(+) = atrochrysone carboxyl-[ACP] + 8 CO2 + 8 CoA + 2 H2O. Its pathway is secondary metabolite biosynthesis. Functionally, non-reducing polyketide synthase; part of the gene cluster that mediates the biosynthesis of trypacidin, a mycotoxin with antiprotozoal activity and that plays a role in the infection process. The pathway begins with the synthesis of atrochrysone thioester by the polyketide synthase (PKS) tpcC. The atrochrysone carboxyl ACP thioesterase tpcB then breaks the thioester bond and releases the atrochrysone carboxylic acid from tpcC. The decarboxylase tpcK converts atrochrysone carboxylic acid to atrochrysone which is further reduced into emodin anthrone. The next step is performed by the emodin anthrone oxygenase tpcL that catalyzes the oxidation of emodin anthrone to emodin. Emodin O-methyltransferase encoded by tpcA catalyzes methylation of the 8-hydroxy group of emodin to form questin. Ring cleavage of questin by questin oxidase tpcI leads to desmethylsulochrin via several intermediates including questin epoxide. Another methylation step catalyzed by tpcM leads to the formation of sulochrin which is further converted to monomethylsulfochrin by tpcH. Finally, the tpcJ catalyzes the conversion of monomethylsulfochrin to trypacidin. Trypacidin is toxic for human pulmonary and bronchial epithelial cells by initiating the intracellular formation of nitric oxide (NO) and hydrogen peroxide (H(2)O(2)), thus triggering host necrotic cell death. The trypacidin pathway is also able to produce endocrocin via a distinct route from the endocrocin Enc pathway. This Aspergillus fumigatus (strain ATCC MYA-4609 / CBS 101355 / FGSC A1100 / Af293) (Neosartorya fumigata) protein is Atrochrysone carboxylic acid synthase.